Reading from the N-terminus, the 217-residue chain is NADH-quinone oxidoreductase subunit I (217 aa).

The tract at residues Thr-22–His-41 is disordered. 4Fe-4S ferredoxin-type domains are found at residues Leu-43 to Ala-73 and Arg-89 to Asp-118. Residues Cys-53, Cys-56, Cys-59, Cys-63, Cys-98, Cys-101, Cys-104, and Cys-108 each contribute to the [4Fe-4S] cluster site. The disordered stretch occupies residues Ala-193–Arg-217.

It belongs to the complex I 23 kDa subunit family. In terms of assembly, NDH-1 is composed of 14 different subunits. Subunits NuoA, H, J, K, L, M, N constitute the membrane sector of the complex. [4Fe-4S] cluster serves as cofactor.

It is found in the cell membrane. It catalyses the reaction a quinone + NADH + 5 H(+)(in) = a quinol + NAD(+) + 4 H(+)(out). Functionally, NDH-1 shuttles electrons from NADH, via FMN and iron-sulfur (Fe-S) centers, to quinones in the respiratory chain. The immediate electron acceptor for the enzyme in this species is believed to be ubiquinone. Couples the redox reaction to proton translocation (for every two electrons transferred, four hydrogen ions are translocated across the cytoplasmic membrane), and thus conserves the redox energy in a proton gradient. This is NADH-quinone oxidoreductase subunit I from Frankia casuarinae (strain DSM 45818 / CECT 9043 / HFP020203 / CcI3).